The following is a 462-amino-acid chain: Myb-like transcriptional regulator mfmK (462 aa).

HTH myb-type domains lie at 1–54 (MARL…WWNS), 56–110 (ADGT…DPGI), and 113–162 (CDWT…LKHE). 3 consecutive DNA-binding regions (H-T-H motif) follow at residues 32–52 (WRDLAKSVPGRSNKDCRRRWW), 83–106 (WSRVSRAIRSRNPDQCSSHWSQVL), and 134–158 (WATIAASHVPPRTRLALKNRYSTLR). Residues 159-175 (LKHENESKRESTIRKSV) show a composition bias toward basic and acidic residues. 3 disordered regions span residues 159–184 (LKHENESKRESTIRKSVETPPSNFEP), 216–262 (DEEE…VDNG), and 374–408 (STTTGMDSSSAPGSRDTPPSMHFGTSASTTPRTSI). Positions 216 to 235 (DEEEDDDDDDEDNEEDDGDD) are enriched in acidic residues. 2 stretches are compositionally biased toward polar residues: residues 374-385 (STTTGMDSSSAP) and 396-408 (FGTSASTTPRTSI).

It is found in the nucleus. In terms of biological role, myb-like transcriptional regulator; part of the gene cluster that mediates the biosynthesis of the phthalide-terpenoid hybrid 11'-O-desmethylfendlerol. The sequence is that of Myb-like transcriptional regulator mfmK from Annulohypoxylon moriforme (Filamentous fungus).